Reading from the N-terminus, the 270-residue chain is Outer membrane protein P.IIC (270 aa).

Residues 1 to 25 form the signal peptide; that stretch reads MQPAKNLLFSSLLFSSLLFSSAARA. Residues 26–35 are Extracellular-facing; it reads ASEDGGRGPY. The beta stranded transmembrane segment at 36–44 threads the bilayer; it reads VQADLAYAA. The Periplasmic portion of the chain corresponds to 45-76; that stretch reads ERITHDYPKPTGTGKNKISTVSDYFRNIRTHS. The beta stranded transmembrane segment at 77-85 threads the bilayer; sequence VHPRVSVGY. The Extracellular portion of the chain corresponds to 86-89; that stretch reads DFGS. The beta stranded transmembrane segment at 90–96 threads the bilayer; sequence WRIAADY. Residues 97 to 142 are Periplasmic-facing; sequence ARYRKWNNNKYSVSIKELLRNDNSASGVRGHLNIQTQKTEHQENGT. A beta stranded membrane pass occupies residues 143–157; sequence FHAVSSLGLSTIYDF. Residues 158–162 are Extracellular-facing; the sequence is DTGSR. Residues 163–173 form a beta stranded membrane-spanning segment; the sequence is FKPYIGMRVAY. Residues 174–221 lie on the Periplasmic side of the membrane; that stretch reads GHVRHQVRSVEQETEIITTYPSNGGGKVSLSSKMPPKSAHHQSNSIRR. The interval 194 to 217 is disordered; the sequence is PSNGGGKVSLSSKMPPKSAHHQSN. The beta stranded transmembrane segment at 222 to 234 threads the bilayer; the sequence is VGLGVIAGVGFDI. Residues 235–237 lie on the Extracellular side of the membrane; the sequence is TPN. The beta stranded transmembrane segment at 238-246 threads the bilayer; the sequence is LTLDTGYRY. The Periplasmic portion of the chain corresponds to 247–261; that stretch reads HNWGRLENTRFKTHE. A beta stranded transmembrane segment spans residues 262–270; sequence ASLGMRYRF.

The protein belongs to the opacity porin family. As to quaternary structure, homotrimer.

The protein localises to the cell outer membrane. Functionally, this protein serves as a porin. The chain is Outer membrane protein P.IIC (piiC) from Neisseria gonorrhoeae.